A 444-amino-acid chain; its full sequence is Bifunctional protein GlmU (444 aa).

Residues 1-226 are pyrophosphorylase; sequence MTDSTHRTTA…EAELAGVNSR (226 aa). Residues 13–16, Lys-27, Gln-75, and 80–81 contribute to the UDP-N-acetyl-alpha-D-glucosamine site; these read LAAG and GT. Asp-103 contacts Mg(2+). The UDP-N-acetyl-alpha-D-glucosamine site is built by Gly-139, Glu-153, Asn-168, and Asn-224. Residue Asn-224 coordinates Mg(2+). Residues 227 to 247 form a linker region; that stretch reads SELARAEATLQTRLRNAAMDA. The segment at 248 to 444 is N-acetyltransferase; the sequence is GVTLVAPETV…QSLKARKEQG (197 aa). 2 residues coordinate UDP-N-acetyl-alpha-D-glucosamine: Arg-313 and Lys-331. Residue His-343 is the Proton acceptor of the active site. 2 residues coordinate UDP-N-acetyl-alpha-D-glucosamine: Tyr-346 and Asn-357. Acetyl-CoA is bound by residues Ala-360, 366 to 367, Ser-385, Ala-403, and Arg-420; that span reads NY.

This sequence in the N-terminal section; belongs to the N-acetylglucosamine-1-phosphate uridyltransferase family. In the C-terminal section; belongs to the transferase hexapeptide repeat family. Homotrimer. The cofactor is Mg(2+).

Its subcellular location is the cytoplasm. The catalysed reaction is alpha-D-glucosamine 1-phosphate + acetyl-CoA = N-acetyl-alpha-D-glucosamine 1-phosphate + CoA + H(+). It carries out the reaction N-acetyl-alpha-D-glucosamine 1-phosphate + UTP + H(+) = UDP-N-acetyl-alpha-D-glucosamine + diphosphate. The protein operates within nucleotide-sugar biosynthesis; UDP-N-acetyl-alpha-D-glucosamine biosynthesis; N-acetyl-alpha-D-glucosamine 1-phosphate from alpha-D-glucosamine 6-phosphate (route II): step 2/2. It participates in nucleotide-sugar biosynthesis; UDP-N-acetyl-alpha-D-glucosamine biosynthesis; UDP-N-acetyl-alpha-D-glucosamine from N-acetyl-alpha-D-glucosamine 1-phosphate: step 1/1. It functions in the pathway bacterial outer membrane biogenesis; LPS lipid A biosynthesis. In terms of biological role, catalyzes the last two sequential reactions in the de novo biosynthetic pathway for UDP-N-acetylglucosamine (UDP-GlcNAc). The C-terminal domain catalyzes the transfer of acetyl group from acetyl coenzyme A to glucosamine-1-phosphate (GlcN-1-P) to produce N-acetylglucosamine-1-phosphate (GlcNAc-1-P), which is converted into UDP-GlcNAc by the transfer of uridine 5-monophosphate (from uridine 5-triphosphate), a reaction catalyzed by the N-terminal domain. The chain is Bifunctional protein GlmU from Gluconobacter oxydans (strain 621H) (Gluconobacter suboxydans).